Consider the following 158-residue polypeptide: Ribosome maturation factor RimP (158 aa).

The protein belongs to the RimP family.

It is found in the cytoplasm. Required for maturation of 30S ribosomal subunits. This chain is Ribosome maturation factor RimP, found in Leuconostoc mesenteroides subsp. mesenteroides (strain ATCC 8293 / DSM 20343 / BCRC 11652 / CCM 1803 / JCM 6124 / NCDO 523 / NBRC 100496 / NCIMB 8023 / NCTC 12954 / NRRL B-1118 / 37Y).